A 327-amino-acid polypeptide reads, in one-letter code: Cytochrome f (327 aa).

A signal peptide spans 1-24 (MKRIYLALCALLLLLGTGSRPAAA). Residues Tyr25, Cys45, Cys48, and His49 each coordinate heme. A helical transmembrane segment spans residues 293-313 (VKWLVAFLAAVAITQLLLVLK).

Belongs to the cytochrome f family. The 4 large subunits of the cytochrome b6-f complex are cytochrome b6, subunit IV (17 kDa polypeptide, PetD), cytochrome f and the Rieske protein, while the 4 small subunits are PetG, PetL, PetM and PetN. The complex functions as a dimer. Requires heme as cofactor.

It localises to the cellular thylakoid membrane. In terms of biological role, component of the cytochrome b6-f complex, which mediates electron transfer between photosystem II (PSII) and photosystem I (PSI), cyclic electron flow around PSI, and state transitions. In Synechococcus sp. (strain JA-3-3Ab) (Cyanobacteria bacterium Yellowstone A-Prime), this protein is Cytochrome f.